The primary structure comprises 358 residues: MATYPEEAELETEFPGTTFYDYEFAQPCFKVSITDLGAQFLPSLFSLVFIVGLLGNITVIVVLTKYQKLKIMTNIYLLNLAISDLLFLFTLPFWTYYVHWNKWVFGHFMCKIISGLYYVGLFSEIFFIILLTIDRYLAIVHAVFALRTRTVTFGIITSVITWVLAVLAALPEFMFYGTQGHFEVLFCGPSYPEKKEHHWKRFQALRMNIFGLALPLLIMIICYTGIIKTLLRCPSKKKYKAIRLIFVIMVVFFVFWTPYNLLLLFSAFDLSFLDDCERSKQLDMAKHVTEVIAHTHCCINPIIYAFVGERFQKYLRHFLHRNVTMHLSKYIPFFTSEKLERSSSISPSSGDPELSVVF.

Residues 1–43 (MATYPEEAELETEFPGTTFYDYEFAQPCFKVSITDLGAQFLPS) are Extracellular-facing. The chain crosses the membrane as a helical span at residues 44-64 (LFSLVFIVGLLGNITVIVVLT). Residues 65–74 (KYQKLKIMTN) lie on the Cytoplasmic side of the membrane. A helical membrane pass occupies residues 75 to 95 (IYLLNLAISDLLFLFTLPFWT). Over 96-112 (YYVHWNKWVFGHFMCKI) the chain is Extracellular. The chain crosses the membrane as a helical span at residues 113 to 133 (ISGLYYVGLFSEIFFIILLTI). Residues 134-154 (DRYLAIVHAVFALRTRTVTFG) are Cytoplasmic-facing. A helical transmembrane segment spans residues 155–175 (IITSVITWVLAVLAALPEFMF). Over 176 to 206 (YGTQGHFEVLFCGPSYPEKKEHHWKRFQALR) the chain is Extracellular. The chain crosses the membrane as a helical span at residues 207–227 (MNIFGLALPLLIMIICYTGII). The Cytoplasmic portion of the chain corresponds to 228 to 243 (KTLLRCPSKKKYKAIR). Residues 244-264 (LIFVIMVVFFVFWTPYNLLLL) form a helical membrane-spanning segment. Topologically, residues 265–287 (FSAFDLSFLDDCERSKQLDMAKH) are extracellular. The helical transmembrane segment at 288–308 (VTEVIAHTHCCINPIIYAFVG) threads the bilayer. Residues 309–358 (ERFQKYLRHFLHRNVTMHLSKYIPFFTSEKLERSSSISPSSGDPELSVVF) lie on the Cytoplasmic side of the membrane.

This sequence belongs to the G-protein coupled receptor 1 family.

Its subcellular location is the cell membrane. Receptor for C-C type chemokine. Binds and responds to a variety of chemokines, including CCL11, CCL26, CCL7, CCL13, RANTES(CCL5) and CCL15. Subsequently transduces a signal by increasing the intracellular calcium ions level. In addition acts as a possible functional receptor for NARS1. The sequence is that of C-C chemokine receptor type 3 (CCR3) from Cavia porcellus (Guinea pig).